The chain runs to 338 residues: DNA-directed RNA polymerase subunit alpha (338 aa).

Residues methionine 1–aspartate 233 are alpha N-terminal domain (alpha-NTD). The tract at residues isoleucine 250–leucine 338 is alpha C-terminal domain (alpha-CTD).

Belongs to the RNA polymerase alpha chain family. As to quaternary structure, homodimer. The RNAP catalytic core consists of 2 alpha, 1 beta, 1 beta' and 1 omega subunit. When a sigma factor is associated with the core the holoenzyme is formed, which can initiate transcription.

The enzyme catalyses RNA(n) + a ribonucleoside 5'-triphosphate = RNA(n+1) + diphosphate. DNA-dependent RNA polymerase catalyzes the transcription of DNA into RNA using the four ribonucleoside triphosphates as substrates. The protein is DNA-directed RNA polymerase subunit alpha of Syntrophotalea carbinolica (strain DSM 2380 / NBRC 103641 / GraBd1) (Pelobacter carbinolicus).